Here is a 616-residue protein sequence, read N- to C-terminus: MPKYRSATTTHGRNMAGARALWRATGMTDADFGKPIIAVVNSFTQFVPGHVHLRDLGKLVAEQIEAAGGVAKEFNTIAVDDGIAMGHGGMLYSLPSRELIADSVEYMVNAHCADAMVCISNCDKITPGMLMASLRLNIPVIFVSGGPMEAGKTKLSDQIIKLDLVDAMIQGADPKVSDSQSAQVERSACPTCGSCSGMFTANSMNCLTEALGLSQPGNGSLLATHADRKQLFLNAGKRIVELTKRYYEQDDESALPRNIASKAAFENAMTLDIAMGGSTNTVLHLLAAAQEAEIDFTMSDIDKLSRKVPQLCKVAPSTQKYHMEDVHRAGGVIGILGELDRAGLLNRDVKNVLGLTLPQTLEQYDIIVTQDDAVKNMFRAGPAGIRTTQAFSQDCRWDTLDDDRSNGCIRSLEHAYSKDGGLAVLYGNFAENGCIVKTAGVDDSILKFTGPAKVYESQDDAVEAILGGKVVAGDVVVIRYEGPKGGPGMQEMLYPTSFLKSMGLGKACALITDGRFSGGTSGLSIGHVSPEAASGGSIGLIEDGDLIAIDIPNRGIQLQVSDAELAARREAQEARGDKAWTPKNRERQVSFALRAYASLATSADKGAVRDKSKLGG.

Position 81 (Asp-81) interacts with Mg(2+). Cys-122 lines the [2Fe-2S] cluster pocket. Residues Asp-123 and Lys-124 each contribute to the Mg(2+) site. Position 124 is an N6-carboxylysine (Lys-124). Cys-195 lines the [2Fe-2S] cluster pocket. Glu-491 lines the Mg(2+) pocket. Ser-517 functions as the Proton acceptor in the catalytic mechanism.

It belongs to the IlvD/Edd family. Homodimer. [2Fe-2S] cluster is required as a cofactor. It depends on Mg(2+) as a cofactor.

It carries out the reaction (2R)-2,3-dihydroxy-3-methylbutanoate = 3-methyl-2-oxobutanoate + H2O. The enzyme catalyses (2R,3R)-2,3-dihydroxy-3-methylpentanoate = (S)-3-methyl-2-oxopentanoate + H2O. The protein operates within amino-acid biosynthesis; L-isoleucine biosynthesis; L-isoleucine from 2-oxobutanoate: step 3/4. It functions in the pathway amino-acid biosynthesis; L-valine biosynthesis; L-valine from pyruvate: step 3/4. Its function is as follows. Functions in the biosynthesis of branched-chain amino acids. Catalyzes the dehydration of (2R,3R)-2,3-dihydroxy-3-methylpentanoate (2,3-dihydroxy-3-methylvalerate) into 2-oxo-3-methylpentanoate (2-oxo-3-methylvalerate) and of (2R)-2,3-dihydroxy-3-methylbutanoate (2,3-dihydroxyisovalerate) into 2-oxo-3-methylbutanoate (2-oxoisovalerate), the penultimate precursor to L-isoleucine and L-valine, respectively. This is Dihydroxy-acid dehydratase from Escherichia coli O127:H6 (strain E2348/69 / EPEC).